The chain runs to 357 residues: Heme A synthase (357 aa).

5 helical membrane passes run Leu24 to Gly44, Met110 to Gly130, Met140 to Ser160, Ile175 to Val195, and Phe209 to Gly229. His272 is a binding site for heme. 3 consecutive transmembrane segments (helical) span residues Met274–Val294, Thr303–Met323, and Val325–Val345. His333 lines the heme pocket.

This sequence belongs to the COX15/CtaA family. Type 2 subfamily. Interacts with CtaB. The cofactor is heme b.

Its subcellular location is the cell membrane. It carries out the reaction Fe(II)-heme o + 2 A + H2O = Fe(II)-heme a + 2 AH2. The protein operates within porphyrin-containing compound metabolism; heme A biosynthesis; heme A from heme O: step 1/1. Catalyzes the conversion of heme O to heme A by two successive hydroxylations of the methyl group at C8. The first hydroxylation forms heme I, the second hydroxylation results in an unstable dihydroxymethyl group, which spontaneously dehydrates, resulting in the formyl group of heme A. This chain is Heme A synthase, found in Brucella anthropi (strain ATCC 49188 / DSM 6882 / CCUG 24695 / JCM 21032 / LMG 3331 / NBRC 15819 / NCTC 12168 / Alc 37) (Ochrobactrum anthropi).